A 55-amino-acid polypeptide reads, in one-letter code: Large ribosomal subunit protein bL33B (55 aa).

The protein belongs to the bacterial ribosomal protein bL33 family.

This Kineococcus radiotolerans (strain ATCC BAA-149 / DSM 14245 / SRS30216) protein is Large ribosomal subunit protein bL33B.